We begin with the raw amino-acid sequence, 289 residues long: 4-diphosphocytidyl-2-C-methyl-D-erythritol kinase (289 aa).

Residue Lys-10 is part of the active site. 94–104 (PVAAGLAGGSS) serves as a coordination point for ATP. Asp-136 is an active-site residue.

This sequence belongs to the GHMP kinase family. IspE subfamily.

It carries out the reaction 4-CDP-2-C-methyl-D-erythritol + ATP = 4-CDP-2-C-methyl-D-erythritol 2-phosphate + ADP + H(+). It participates in isoprenoid biosynthesis; isopentenyl diphosphate biosynthesis via DXP pathway; isopentenyl diphosphate from 1-deoxy-D-xylulose 5-phosphate: step 3/6. In terms of biological role, catalyzes the phosphorylation of the position 2 hydroxy group of 4-diphosphocytidyl-2C-methyl-D-erythritol. This is 4-diphosphocytidyl-2-C-methyl-D-erythritol kinase from Bacillus cereus (strain G9842).